The following is a 151-amino-acid chain: Probable ribonuclease P/MRP protein subunit POP5 (151 aa).

This sequence belongs to the eukaryotic/archaeal RNase P protein component 2 family. Component of nuclear RNase P and RNase MRP ribonucleoproteins. Interacts with GAF1/RPP30.

The protein resides in the nucleus. The protein localises to the nucleolus. Its function is as follows. Essential protein required during embryogenesis. Component of ribonuclease P, a protein complex that generates mature tRNA molecules by cleaving their 5'-ends. Also a component of RNase MRP. The chain is Probable ribonuclease P/MRP protein subunit POP5 (EMB1687) from Arabidopsis thaliana (Mouse-ear cress).